We begin with the raw amino-acid sequence, 185 residues long: Dual specificity protein phosphatase 3 (185 aa).

The Tyrosine-protein phosphatase domain occupies 28–179; sequence QPCNEVVPRV…LCQLNDRLAK (152 aa). Cysteine 124 serves as the catalytic Phosphocysteine intermediate.

The protein belongs to the protein-tyrosine phosphatase family. Non-receptor class dual specificity subfamily. In terms of assembly, microtubule inner protein component of sperm flagellar doublet microtubules. Interacts with VRK3; this interaction activates DUSP3 phosphatase activity.

The protein resides in the nucleus. Its subcellular location is the cytoplasm. It localises to the cytoskeleton. The protein localises to the flagellum axoneme. It catalyses the reaction O-phospho-L-tyrosyl-[protein] + H2O = L-tyrosyl-[protein] + phosphate. The catalysed reaction is O-phospho-L-seryl-[protein] + H2O = L-seryl-[protein] + phosphate. It carries out the reaction O-phospho-L-threonyl-[protein] + H2O = L-threonyl-[protein] + phosphate. Its function is as follows. Shows activity both for tyrosine-protein phosphate and serine-protein phosphate, but displays a strong preference toward phosphotyrosines. Specifically dephosphorylates and inactivates ERK1 and ERK2. This is Dual specificity protein phosphatase 3 (Dusp3) from Mus musculus (Mouse).